A 206-amino-acid polypeptide reads, in one-letter code: 2-phospho-L-lactate guanylyltransferase (206 aa).

Belongs to the CofC family. Homodimer.

The catalysed reaction is (2S)-2-phospholactate + GTP + H(+) = (2S)-lactyl-2-diphospho-5'-guanosine + diphosphate. It functions in the pathway cofactor biosynthesis; coenzyme F420 biosynthesis. In terms of biological role, guanylyltransferase that catalyzes the activation of (2S)-2-phospholactate (2-PL) as (2S)-lactyl-2-diphospho-5'-guanosine, via the condensation of 2-PL with GTP. It is involved in the biosynthesis of coenzyme F420, a hydride carrier cofactor. This chain is 2-phospho-L-lactate guanylyltransferase, found in Haloferax volcanii (strain ATCC 29605 / DSM 3757 / JCM 8879 / NBRC 14742 / NCIMB 2012 / VKM B-1768 / DS2) (Halobacterium volcanii).